Here is a 340-residue protein sequence, read N- to C-terminus: Phosphoribosylformylglycinamidine cyclo-ligase (340 aa).

The protein belongs to the AIR synthase family.

It localises to the cytoplasm. It carries out the reaction 2-formamido-N(1)-(5-O-phospho-beta-D-ribosyl)acetamidine + ATP = 5-amino-1-(5-phospho-beta-D-ribosyl)imidazole + ADP + phosphate + H(+). It participates in purine metabolism; IMP biosynthesis via de novo pathway; 5-amino-1-(5-phospho-D-ribosyl)imidazole from N(2)-formyl-N(1)-(5-phospho-D-ribosyl)glycinamide: step 2/2. The chain is Phosphoribosylformylglycinamidine cyclo-ligase from Macrococcus caseolyticus (strain JCSC5402) (Macrococcoides caseolyticum).